A 148-amino-acid polypeptide reads, in one-letter code: NADPH-dependent 7-cyano-7-deazaguanine reductase (148 aa).

Cys-50 acts as the Thioimide intermediate in catalysis. Asp-57 acts as the Proton donor in catalysis. Substrate-binding positions include 72 to 74 and 91 to 92; these read VES and HE.

Belongs to the GTP cyclohydrolase I family. QueF type 1 subfamily.

It localises to the cytoplasm. The catalysed reaction is 7-aminomethyl-7-carbaguanine + 2 NADP(+) = 7-cyano-7-deazaguanine + 2 NADPH + 3 H(+). Its pathway is tRNA modification; tRNA-queuosine biosynthesis. Catalyzes the NADPH-dependent reduction of 7-cyano-7-deazaguanine (preQ0) to 7-aminomethyl-7-deazaguanine (preQ1). In Helicobacter pylori (strain ATCC 700392 / 26695) (Campylobacter pylori), this protein is NADPH-dependent 7-cyano-7-deazaguanine reductase.